The sequence spans 151 residues: 1,4-dihydroxy-2-naphthoyl-CoA hydrolase (151 aa).

Asp23 is a catalytic residue.

It belongs to the 4-hydroxybenzoyl-CoA thioesterase family. DHNA-CoA hydrolase subfamily.

It carries out the reaction 1,4-dihydroxy-2-naphthoyl-CoA + H2O = 1,4-dihydroxy-2-naphthoate + CoA + H(+). It participates in cofactor biosynthesis; phylloquinone biosynthesis. It functions in the pathway quinol/quinone metabolism; 1,4-dihydroxy-2-naphthoate biosynthesis; 1,4-dihydroxy-2-naphthoate from chorismate: step 7/7. Catalyzes the hydrolysis of 1,4-dihydroxy-2-naphthoyl-CoA (DHNA-CoA) to 1,4-dihydroxy-2-naphthoate (DHNA), a reaction involved in phylloquinone (vitamin K1) biosynthesis. This is 1,4-dihydroxy-2-naphthoyl-CoA hydrolase from Prochlorococcus marinus (strain MIT 9211).